A 292-amino-acid polypeptide reads, in one-letter code: Diaminopimelate epimerase (292 aa).

3 residues coordinate substrate: Asn13, Gln46, and Asn66. The Proton donor role is filled by Cys75. Substrate is bound by residues 76-77 (GN), Asn166, Asn199, and 217-218 (ER). Cys226 functions as the Proton acceptor in the catalytic mechanism. 227–228 (GT) contacts substrate.

This sequence belongs to the diaminopimelate epimerase family. Homodimer.

Its subcellular location is the cytoplasm. It carries out the reaction (2S,6S)-2,6-diaminopimelate = meso-2,6-diaminopimelate. Its pathway is amino-acid biosynthesis; L-lysine biosynthesis via DAP pathway; DL-2,6-diaminopimelate from LL-2,6-diaminopimelate: step 1/1. Its function is as follows. Catalyzes the stereoinversion of LL-2,6-diaminopimelate (L,L-DAP) to meso-diaminopimelate (meso-DAP), a precursor of L-lysine and an essential component of the bacterial peptidoglycan. This is Diaminopimelate epimerase from Ralstonia pickettii (strain 12J).